Consider the following 2572-residue polypeptide: Zinc finger homeobox protein 2 (2572 aa).

Disordered stretches follow at residues 1–107 (MATL…GLPP) and 343–425 (LSPP…ADDY). Positions 8-36 (STTGTTPSPGHNAPSLPSDTFSSSTPSDP) are enriched in low complexity. Polar residues-rich tracts occupy residues 44–53 (ASSTSENMRS) and 389–398 (LNQSSPTSKE). 2 C2H2-type zinc fingers span residues 453-476 (LKCP…REKH) and 508-532 (YRCD…SDKH). 3 disordered regions span residues 537–566 (QGFQ…PKTK), 608–655 (LPPG…LRPD), and 675–710 (RKFP…SPPP). Pro residues predominate over residues 615-628 (PGPPPPPGATPTSP). Residues 696–705 (LLGSSSDSLP) show a composition bias toward low complexity. C2H2-type zinc fingers lie at residues 821 to 845 (LRCN…GAAH) and 870 to 894 (YHCL…TPAH). The disordered stretch occupies residues 929-974 (QLRTPGKAPVTPLAEPPTPEKDAQNKTEQLASEETENKTGPSRDSA). The span at 954–974 (KTEQLASEETENKTGPSRDSA) shows a compositional bias: polar residues. The C2H2-type 5 zinc-finger motif lies at 1009-1032 (YRCPLCQEQLVGRPALHFHLSHLH). The interval 1061-1171 (PTLSPLDNGQ…PAPADSRHPL (111 aa)) is disordered. Pro residues predominate over residues 1120–1132 (GQPPSPAPSPVPE). 2 consecutive C2H2-type zinc fingers follow at residues 1191-1217 (YKCT…SHLH) and 1248-1272 (FKCT…SVLH). Disordered stretches follow at residues 1269–1325 (SVLH…FLSP), 1389–1408 (LPAA…LAER), and 1415–1434 (MAKE…LPNE). The segment covering 1279-1311 (TKTDSKIEGPERSQEEPKEGETEGEVGTEKKGP) has biased composition (basic and acidic residues). Positions 1392–1401 (ATPPPPPQPP) are enriched in pro residues. Residues 1480–1503 (LACGACGKLFSNMLILKTHEEHVH) form a C2H2-type 8 zinc finger. Residues 1528 to 1591 (PPLAEPPKPP…SSRGNLPPLV (64 aa)) are disordered. The segment at residues 1595-1654 (RRFSRTKFTEFQTQALQSFFETSAYPKDGEVERLASLLGLASRVVVVWFQNARQKARKNA) is a DNA-binding region (homeobox 1). The segment at 1670-1696 (SGCRRCHATFSCVFELVRHLKKCYDDQ) adopts a C2H2-type 9; degenerate zinc-finger fold. The segment covering 1696–1724 (QTLEEEEEEAERGEEEEEVEEEEVEEEQG) has biased composition (acidic residues). 5 disordered regions span residues 1696–1769 (QTLE…SPAH), 1820–1860 (AATS…DKRL), 1912–2065 (ERKG…GMGQ), 2268–2327 (VQTA…NDAL), and 2398–2431 (NALL…EAGE). The span at 1728-1738 (PAGPEGPLPEP) shows a compositional bias: pro residues. The segment at 1769–1791 (HTCDQCAISFSSQDLLTSHRRLH) adopts a C2H2-type 10 zinc-finger fold. A DNA-binding region (homeobox 2) is located at residues 1857 to 1916 (DKRLRTTILPEQLEILYRWYMQDSNPTRKMLDCISEEVGLKKRVVQVWFQNTRARERKGQ). Positions 1925–1939 (PSPAVKPPATATPAS) are enriched in low complexity. Residues 1949-1963 (KVDDGTGREAPKREA) show a composition bias toward basic and acidic residues. A compositionally biased stretch (pro residues) spans 1991–2004 (TPEPPLPLLPPPPP). Residues 2017–2044 (SPESEACSLSAGDLSDSSASSLAEPESP) are compositionally biased toward low complexity. Residues 2045-2061 (GAGGTSGGPGGGTGVPD) are compositionally biased toward gly residues. The segment at residues 2065–2124 (QRRYRTQMSSLQLKIMKACYEAYRTPTMQECEVLGEEIGLPKRVIQVWFQNARAKEKKAK) is a DNA-binding region (homeobox 3). Positions 2284 to 2293 (DQTNTSTAGT) are enriched in polar residues. Positions 2305–2315 (LGDKVSSERKP) are enriched in basic and acidic residues. The span at 2402–2422 (QPPPQPPEPTATAPPKPPELP) shows a compositional bias: pro residues. A C2H2-type 11; degenerate zinc finger spans residues 2451–2471 (YLCRQCKMAFDGEAPATAHQR). The C2H2-type 12 zinc finger occupies 2495 to 2519 (YHCLACEVLLSGREALASHLRSSAH). Positions 2551 to 2572 (EARLPHTDSNPKTTTTSTLLAL) are disordered. A compositionally biased stretch (low complexity) spans 2563 to 2572 (TTTTSTLLAL).

The protein localises to the nucleus. In terms of biological role, transcriptional regulator that is critical for the regulation of pain perception and processing of noxious stimuli. This chain is Zinc finger homeobox protein 2 (ZFHX2), found in Homo sapiens (Human).